The sequence spans 505 residues: GDP-Man:Man(3)GlcNAc(2)-PP-Dol alpha-1,2-mannosyltransferase (505 aa).

The Lumenal portion of the chain corresponds to 1–4 (MSTM). Residues 5–25 (LWVVVAAVLLFVLPVVRVPML) traverse the membrane as a helical segment. Topologically, residues 26 to 130 (DLTRRNIIRW…KWVDGSTWKH (105 aa)) are cytoplasmic. Residues 131–151 (LTLVGQAMGSMLLTIEALLRF) constitute an intramembrane region (helical). Residues 152–374 (VPDIWLDTMG…FGINAMWNEH (223 aa)) lie on the Cytoplasmic side of the membrane. The segment at residues 375 to 395 (FGIAVVEYAAAGLISLVHASA) is an intramembrane region (helical). Residues 396–505 (GPLLDIIVPW…EHKTSRLGSN (110 aa)) lie on the Cytoplasmic side of the membrane.

It belongs to the glycosyltransferase group 1 family.

It is found in the endoplasmic reticulum membrane. It catalyses the reaction an alpha-D-Man-(1-&gt;3)-[alpha-D-Man-(1-&gt;6)]-beta-D-Man-(1-&gt;4)-beta-D-GlcNAc-(1-&gt;4)-alpha-D-GlcNAc-diphospho-di-trans,poly-cis-dolichol + 2 GDP-alpha-D-mannose = an alpha-D-Man-(1-&gt;2)-alpha-D-Man-(1-&gt;2)-alpha-D-Man-(1-&gt;3)-[alpha-D-Man-(1-&gt;6)]-beta-D-Man-(1-&gt;4)-beta-D-GlcNAc-(1-&gt;4)-alpha-D-GlcNAc-diphospho-di-trans,poly-cis-dolichol + 2 GDP + 2 H(+). The protein operates within protein modification; protein glycosylation. GDP-Man:Man(3)GlcNAc(2)-PP-Dol alpha-1,2-mannosyltransferase that operates in the biosynthetic pathway of dolichol-linked oligosaccharides, the glycan precursors employed in protein asparagine (N)-glycosylation. The assembly of dolichol-linked oligosaccharides begins on the cytosolic side of the endoplasmic reticulum membrane and finishes in its lumen. The sequential addition of sugars to dolichol pyrophosphate produces dolichol-linked oligosaccharides containing fourteen sugars, including two GlcNAcs, nine mannoses and three glucoses. Once assembled, the oligosaccharide is transferred from the lipid to nascent proteins by oligosaccharyltransferases. Catalyzes, on the cytoplasmic face of the endoplasmic reticulum, the addition of the fourth and fifth mannose residues to the dolichol-linked oligosaccharide chain, to produce Man(5)GlcNAc(2)-PP-dolichol core oligosaccharide. The protein is GDP-Man:Man(3)GlcNAc(2)-PP-Dol alpha-1,2-mannosyltransferase (ALG11) of Candida glabrata (strain ATCC 2001 / BCRC 20586 / JCM 3761 / NBRC 0622 / NRRL Y-65 / CBS 138) (Yeast).